Consider the following 658-residue polypeptide: Squalene--hopene cyclase (658 aa).

A PFTB 1 repeat occupies 69 to 110; sequence EAKIGRYLRRIQGEHGGWSLFYGGDLDLSATVKAYFALKMIG. Catalysis depends on aspartate 392, which acts as the Proton donor. 3 PFTB repeats span residues 418 to 459, 486 to 526, and 534 to 584; these read KARA…GALL, MKAA…NVAA, and IQKA…GLMA.

This sequence belongs to the terpene cyclase/mutase family.

The protein resides in the cell membrane. It catalyses the reaction squalene = hop-22(29)-ene. The catalysed reaction is squalene + H2O = hopan-22-ol. Its pathway is secondary metabolite biosynthesis; hopanoid biosynthesis. Catalyzes the cyclization of squalene into hopene. This Zymomonas mobilis subsp. mobilis (strain ATCC 31821 / ZM4 / CP4) protein is Squalene--hopene cyclase (shc).